The chain runs to 290 residues: uncharacterized protein (290 aa).

The HTH lysR-type domain occupies 1–61 (MVMNMNHLHI…RDKHHGLMLT (61 aa)). The segment at residues 20–39 (ITEAAKELFISQPAVSKAIK) is a DNA-binding region (H-T-H motif).

This sequence belongs to the LysR transcriptional regulatory family.

This is an uncharacterized protein from Bacillus subtilis (strain 168).